The chain runs to 198 residues: Glycerol-3-phosphate acyltransferase (198 aa).

The next 5 helical transmembrane spans lie at 1–21 (MTII…GFLF), 77–97 (HLFE…PIWL), 111–131 (MFIA…LIIL), 136–156 (IVSL…FLDI), and 157–177 (GVTN…VILK).

The protein belongs to the PlsY family. Probably interacts with PlsX.

It is found in the cell inner membrane. It catalyses the reaction an acyl phosphate + sn-glycerol 3-phosphate = a 1-acyl-sn-glycero-3-phosphate + phosphate. It participates in lipid metabolism; phospholipid metabolism. Its function is as follows. Catalyzes the transfer of an acyl group from acyl-phosphate (acyl-PO(4)) to glycerol-3-phosphate (G3P) to form lysophosphatidic acid (LPA). This enzyme utilizes acyl-phosphate as fatty acyl donor, but not acyl-CoA or acyl-ACP. In Prochlorococcus marinus (strain MIT 9515), this protein is Glycerol-3-phosphate acyltransferase.